A 358-amino-acid chain; its full sequence is 3-isopropylmalate dehydrogenase (358 aa).

77-90 (GEKWDSLPRELRPE) lines the NAD(+) pocket. Substrate contacts are provided by R97, R107, R135, and D220. Mg(2+) contacts are provided by D220, D244, and D248. Residue 277-289 (GSAPDIAGQGIAN) participates in NAD(+) binding.

It belongs to the isocitrate and isopropylmalate dehydrogenases family. LeuB type 1 subfamily. As to quaternary structure, homodimer. The cofactor is Mg(2+). Mn(2+) is required as a cofactor.

The protein localises to the cytoplasm. The catalysed reaction is (2R,3S)-3-isopropylmalate + NAD(+) = 4-methyl-2-oxopentanoate + CO2 + NADH. It participates in amino-acid biosynthesis; L-leucine biosynthesis; L-leucine from 3-methyl-2-oxobutanoate: step 3/4. Its function is as follows. Catalyzes the oxidation of 3-carboxy-2-hydroxy-4-methylpentanoate (3-isopropylmalate) to 3-carboxy-4-methyl-2-oxopentanoate. The product decarboxylates to 4-methyl-2 oxopentanoate. This Wolinella succinogenes (strain ATCC 29543 / DSM 1740 / CCUG 13145 / JCM 31913 / LMG 7466 / NCTC 11488 / FDC 602W) (Vibrio succinogenes) protein is 3-isopropylmalate dehydrogenase.